A 54-amino-acid chain; its full sequence is ComX pheromone (54 aa).

Positions 1 to 46 (MQEIVGYLVKNPEVLDEVMKGRASLLNIDKDQLKSIVDAFGGLQIY) are excised as a propeptide. W51 is lipidated: 3'-geranyl-2',N2-cyclotryptophan.

In terms of assembly, interacts directly with the sensor histidine kinase ComP and stimulates its activity. Trp-51 is modified by isoprenylation, probably by geranylation, which is essential for activity. Modified by the tryptophan prenyltransferase ComQ before export to the extracellular environment. The type of isoprenyl derivative differs among the different pherotypes and depends on ComX primary sequence.

Its subcellular location is the secreted. In terms of biological role, part of a major quorum-sensing system that regulates the development of genetic competence. Acts through the activation of the two-component regulatory system ComP/ComA composed of a sensor histidine kinase, ComP, and a response regulator, ComA. In Bacillus mojavensis, this protein is ComX pheromone.